We begin with the raw amino-acid sequence, 631 residues long: Acurin A biosynthesis cluster transcription regulator (631 aa).

Residues 1-11 show a composition bias toward polar residues; that stretch reads MSPNMSLTASH. The tract at residues 1-28 is disordered; the sequence is MSPNMSLTASHPQQPQPTPQSKAQLTRQ. The zn(2)-C6 fungal-type DNA-binding region spans 30–62; that stretch reads CNRCHASKLKCLRPPGVTTSKSCIRCIKADTEC. 3 disordered regions span residues 64 to 141, 489 to 522, and 536 to 573; these read YDPP…PDNR, CSSS…HPAT, and HSSS…YPTP. Positions 88–99 are enriched in basic and acidic residues; that stretch reads IEAREPEVTDPR. Residues 119 to 128 are compositionally biased toward polar residues; the sequence is NGSLAPSSAA.

The protein resides in the nucleus. In terms of biological role, transcription factor that positively regulates the expression of the cluster that mediates the biosynthesis of acurin A, a highly reduced polyketide coupled to a serine via a peptide bond. In Aspergillus aculeatus (strain ATCC 16872 / CBS 172.66 / WB 5094), this protein is Acurin A biosynthesis cluster transcription regulator.